Reading from the N-terminus, the 2149-residue chain is Oxygen-regulated protein 1 (2149 aa).

The span at 1–20 (MSDTPSTGFSMIHPTSSEGQ) shows a compositional bias: polar residues. The segment at 1 to 25 (MSDTPSTGFSMIHPTSSEGQVPSPR) is disordered. The region spanning 36–118 (KRISFYKSGD…GRKVQPVDLD (83 aa)) is the Doublecortin 1 domain. The interval 127–148 (WLSSRAVSTHAPPHSVAAPGMP) is disordered. In terms of domain architecture, Doublecortin 2 spans 152–231 (RSLVVFRNGD…REPFKPGNYD (80 aa)). 3 disordered regions span residues 351–373 (VSKT…RTES), 1435–1456 (MEEP…SSER), and 1583–1613 (VTSD…SGEL). The segment covering 1446–1456 (SVTNSVTSSER) has biased composition (polar residues).

As to quaternary structure, interacts (via the doublecortin domains) with microtubules. Interacts with RP1L1. Interacts with MAK.

It is found in the cytoplasm. The protein resides in the cytoskeleton. Its subcellular location is the cilium axoneme. It localises to the cell projection. The protein localises to the cilium. It is found in the photoreceptor outer segment. Microtubule-associated protein regulating the stability and length of the microtubule-based axoneme of photoreceptors. Required for the differentiation of photoreceptor cells, it plays a role in the organization of the outer segment of rod and cone photoreceptors ensuring the correct orientation and higher-order stacking of outer segment disks along the photoreceptor axoneme. The protein is Oxygen-regulated protein 1 (RP1) of Saimiri boliviensis boliviensis (Bolivian squirrel monkey).